We begin with the raw amino-acid sequence, 236 residues long: tRNA1(Val) (adenine(37)-N6)-methyltransferase (236 aa).

The protein belongs to the methyltransferase superfamily. tRNA (adenine-N(6)-)-methyltransferase family.

The protein resides in the cytoplasm. It catalyses the reaction adenosine(37) in tRNA1(Val) + S-adenosyl-L-methionine = N(6)-methyladenosine(37) in tRNA1(Val) + S-adenosyl-L-homocysteine + H(+). Functionally, specifically methylates the adenine in position 37 of tRNA(1)(Val) (anticodon cmo5UAC). This chain is tRNA1(Val) (adenine(37)-N6)-methyltransferase, found in Histophilus somni (strain 2336) (Haemophilus somnus).